The sequence spans 230 residues: A-type ATP synthase subunit D (230 aa).

A disordered region spans residues 204-230 (AKKEEEEDALAAEEEAEEEPEAVTADD). Over residues 208-230 (EEEDALAAEEEAEEEPEAVTADD) the composition is skewed to acidic residues.

This sequence belongs to the V-ATPase D subunit family. Has multiple subunits with at least A(3), B(3), C, D, E, F, H, I and proteolipid K(x).

It localises to the cell membrane. Functionally, component of the A-type ATP synthase that produces ATP from ADP in the presence of a proton gradient across the membrane. The sequence is that of A-type ATP synthase subunit D from Haloarcula marismortui (strain ATCC 43049 / DSM 3752 / JCM 8966 / VKM B-1809) (Halobacterium marismortui).